The following is a 132-amino-acid chain: Small ribosomal subunit protein uS11 (132 aa).

The protein belongs to the universal ribosomal protein uS11 family. Part of the 30S ribosomal subunit.

In terms of biological role, located on the platform of the 30S subunit. In Sulfurisphaera tokodaii (strain DSM 16993 / JCM 10545 / NBRC 100140 / 7) (Sulfolobus tokodaii), this protein is Small ribosomal subunit protein uS11.